A 142-amino-acid chain; its full sequence is HTH-type transcriptional regulator MntR (142 aa).

The 63-residue stretch at 1 to 63 (MPTPSMEDYI…YEKYRGLILT (63 aa)) folds into the HTH dtxR-type domain. Residues Asp8, Glu11, His77, Glu99, Glu102, and His103 each coordinate Mn(2+).

This sequence belongs to the DtxR/MntR family. As to quaternary structure, homodimer.

Its subcellular location is the cytoplasm. With respect to regulation, DNA binding is strongly activated by Mn(2+). In terms of biological role, central regulator of manganese homeostasis. The sequence is that of HTH-type transcriptional regulator MntR from Listeria monocytogenes serotype 4b (strain F2365).